The chain runs to 224 residues: Cytidylate kinase (224 aa).

Position 9–17 (9–17 (GPSGVGKGT)) interacts with ATP.

It belongs to the cytidylate kinase family. Type 1 subfamily.

It localises to the cytoplasm. It catalyses the reaction CMP + ATP = CDP + ADP. It carries out the reaction dCMP + ATP = dCDP + ADP. In Dichelobacter nodosus (strain VCS1703A), this protein is Cytidylate kinase.